We begin with the raw amino-acid sequence, 249 residues long: 2,3-bisphosphoglycerate-dependent phosphoglycerate mutase (249 aa).

Residues 8–15 (RHGESAWN), 21–22 (TG), R60, 87–90 (ERHY), K98, 114–115 (RR), and 183–184 (GN) contribute to the substrate site. H9 serves as the catalytic Tele-phosphohistidine intermediate. The active-site Proton donor/acceptor is the E87.

This sequence belongs to the phosphoglycerate mutase family. BPG-dependent PGAM subfamily.

It carries out the reaction (2R)-2-phosphoglycerate = (2R)-3-phosphoglycerate. The protein operates within carbohydrate degradation; glycolysis; pyruvate from D-glyceraldehyde 3-phosphate: step 3/5. Catalyzes the interconversion of 2-phosphoglycerate and 3-phosphoglycerate. This Methanosphaerula palustris (strain ATCC BAA-1556 / DSM 19958 / E1-9c) protein is 2,3-bisphosphoglycerate-dependent phosphoglycerate mutase.